Consider the following 101-residue polypeptide: Small ribosomal subunit protein bS18c (101 aa).

This sequence belongs to the bacterial ribosomal protein bS18 family. In terms of assembly, part of the 30S ribosomal subunit.

The protein localises to the plastid. It is found in the chloroplast. The sequence is that of Small ribosomal subunit protein bS18c from Populus alba (White poplar).